The sequence spans 491 residues: Glutamyl-tRNA(Gln) amidotransferase subunit A (491 aa).

Catalysis depends on charge relay system residues Lys-79 and Ser-154. Ser-178 (acyl-ester intermediate) is an active-site residue.

It belongs to the amidase family. GatA subfamily. In terms of assembly, heterotrimer of A, B and C subunits.

The enzyme catalyses L-glutamyl-tRNA(Gln) + L-glutamine + ATP + H2O = L-glutaminyl-tRNA(Gln) + L-glutamate + ADP + phosphate + H(+). Its function is as follows. Allows the formation of correctly charged Gln-tRNA(Gln) through the transamidation of misacylated Glu-tRNA(Gln) in organisms which lack glutaminyl-tRNA synthetase. The reaction takes place in the presence of glutamine and ATP through an activated gamma-phospho-Glu-tRNA(Gln). The chain is Glutamyl-tRNA(Gln) amidotransferase subunit A from Synechococcus sp. (strain CC9605).